The primary structure comprises 367 residues: Germination protease (367 aa).

The propeptide occupies 1–15 (MKEPLDLSKYSIRTD).

The protein belongs to the peptidase A25 family. Homotetramer. Post-translationally, autoproteolytically processed. The inactive tetrameric zymogen termed p46 autoprocesses to a smaller form termed p41, which is active only during spore germination.

It catalyses the reaction Endopeptidase action with P4 Glu or Asp, P1 preferably Glu &gt; Asp, P1' hydrophobic and P2' Ala.. Initiates the rapid degradation of small, acid-soluble proteins during spore germination. This chain is Germination protease, found in Bacillus cereus (strain ATCC 14579 / DSM 31 / CCUG 7414 / JCM 2152 / NBRC 15305 / NCIMB 9373 / NCTC 2599 / NRRL B-3711).